Consider the following 134-residue polypeptide: Large ribosomal subunit protein uL22 (134 aa).

Belongs to the universal ribosomal protein uL22 family. As to quaternary structure, part of the 50S ribosomal subunit.

Its function is as follows. This protein binds specifically to 23S rRNA; its binding is stimulated by other ribosomal proteins, e.g. L4, L17, and L20. It is important during the early stages of 50S assembly. It makes multiple contacts with different domains of the 23S rRNA in the assembled 50S subunit and ribosome. Functionally, the globular domain of the protein is located near the polypeptide exit tunnel on the outside of the subunit, while an extended beta-hairpin is found that lines the wall of the exit tunnel in the center of the 70S ribosome. In Rhodococcus erythropolis (strain PR4 / NBRC 100887), this protein is Large ribosomal subunit protein uL22.